A 202-amino-acid polypeptide reads, in one-letter code: N-(5'-phosphoribosyl)anthranilate isomerase (202 aa).

The protein belongs to the TrpF family.

The catalysed reaction is N-(5-phospho-beta-D-ribosyl)anthranilate = 1-(2-carboxyphenylamino)-1-deoxy-D-ribulose 5-phosphate. It participates in amino-acid biosynthesis; L-tryptophan biosynthesis; L-tryptophan from chorismate: step 3/5. This chain is N-(5'-phosphoribosyl)anthranilate isomerase, found in Geobacter metallireducens (strain ATCC 53774 / DSM 7210 / GS-15).